Here is a 281-residue protein sequence, read N- to C-terminus: 2-dehydro-3-deoxyphosphooctonate aldolase (281 aa).

The protein belongs to the KdsA family.

It localises to the cytoplasm. The catalysed reaction is D-arabinose 5-phosphate + phosphoenolpyruvate + H2O = 3-deoxy-alpha-D-manno-2-octulosonate-8-phosphate + phosphate. It functions in the pathway carbohydrate biosynthesis; 3-deoxy-D-manno-octulosonate biosynthesis; 3-deoxy-D-manno-octulosonate from D-ribulose 5-phosphate: step 2/3. It participates in bacterial outer membrane biogenesis; lipopolysaccharide biosynthesis. The sequence is that of 2-dehydro-3-deoxyphosphooctonate aldolase from Pseudomonas fluorescens (strain ATCC BAA-477 / NRRL B-23932 / Pf-5).